Here is a 289-residue protein sequence, read N- to C-terminus: Diaminopimelate epimerase (289 aa).

Residues asparagine 13, glutamine 47, and asparagine 67 each contribute to the substrate site. Cysteine 76 serves as the catalytic Proton donor. Residues 77-78 (GN), asparagine 167, asparagine 200, and 218-219 (ER) each bind substrate. The active-site Proton acceptor is cysteine 227. 228–229 (GT) contributes to the substrate binding site.

Belongs to the diaminopimelate epimerase family. Homodimer.

It is found in the cytoplasm. It catalyses the reaction (2S,6S)-2,6-diaminopimelate = meso-2,6-diaminopimelate. It functions in the pathway amino-acid biosynthesis; L-lysine biosynthesis via DAP pathway; DL-2,6-diaminopimelate from LL-2,6-diaminopimelate: step 1/1. Its function is as follows. Catalyzes the stereoinversion of LL-2,6-diaminopimelate (L,L-DAP) to meso-diaminopimelate (meso-DAP), a precursor of L-lysine and an essential component of the bacterial peptidoglycan. The chain is Diaminopimelate epimerase from Burkholderia vietnamiensis (strain G4 / LMG 22486) (Burkholderia cepacia (strain R1808)).